We begin with the raw amino-acid sequence, 212 residues long: Probable NADH dehydrogenase [ubiquinone] iron-sulfur protein 8, mitochondrial (212 aa).

4Fe-4S ferredoxin-type domains lie at 104–133 (RRYP…IEAE) and 143–172 (TRYD…EGPN). Residues Cys-113, Cys-116, Cys-119, Cys-123, Cys-152, Cys-155, Cys-158, and Cys-162 each contribute to the [4Fe-4S] cluster site.

The protein belongs to the complex I 23 kDa subunit family. As to quaternary structure, complex I is composed of 45 different subunits This is a component of the iron-sulfur (IP) fragment of the enzyme. Requires [4Fe-4S] cluster as cofactor.

Its subcellular location is the mitochondrion. It carries out the reaction a ubiquinone + NADH + 5 H(+)(in) = a ubiquinol + NAD(+) + 4 H(+)(out). In terms of biological role, core subunit of the mitochondrial membrane respiratory chain NADH dehydrogenase (Complex I) that is believed to belong to the minimal assembly required for catalysis. Complex I functions in the transfer of electrons from NADH to the respiratory chain. The immediate electron acceptor for the enzyme is believed to be ubiquinone. This is Probable NADH dehydrogenase [ubiquinone] iron-sulfur protein 8, mitochondrial from Caenorhabditis elegans.